The sequence spans 1648 residues: Putative 1-phosphatidylinositol-3-phosphate 5-kinase FAB1C (1648 aa).

Basic and acidic residues predominate over residues 97–106 (YDKVHPRDSP). 4 disordered regions span residues 97 to 116 (YDKV…ATES), 241 to 276 (QEDH…NDDA), 721 to 746 (SEIP…ENQL), and 1083 to 1139 (KTGD…GTSL). Residues 1084–1130 (TGDDNAPRNPEMHDPPKIDRRMQEGSDERDEQSHTDSEANGDNKDPE) show a composition bias toward basic and acidic residues. The PIPK domain occupies 1316–1639 (NLNNRESEPS…RFRKAMTTYF (324 aa)).

As to quaternary structure, component of the PI(3,5)P2 regulatory complex at least composed of ATG18, SAC/FIG4, FAB1 and VAC14. Mg(2+) serves as cofactor. Mn(2+) is required as a cofactor.

The enzyme catalyses a 1,2-diacyl-sn-glycero-3-phospho-(1D-myo-inositol-3-phosphate) + ATP = a 1,2-diacyl-sn-glycero-3-phospho-(1D-myo-inositol-3,5-bisphosphate) + ADP + H(+). Its function is as follows. The PI(3,5)P2 regulatory complex regulates both the synthesis and turnover of phosphatidylinositol 3,5-bisphosphate (PtdIns(3,5)P2). Catalyzes the phosphorylation of phosphatidylinositol 3-phosphate on the fifth hydroxyl of the myo-inositol ring, to form phosphatidylinositol 3,5-bisphosphate. The protein is Putative 1-phosphatidylinositol-3-phosphate 5-kinase FAB1C (FAB1C) of Arabidopsis thaliana (Mouse-ear cress).